A 372-amino-acid chain; its full sequence is DNA replication and repair protein RecF (372 aa).

ATP is bound at residue 30–37 (GENGQGKT).

Belongs to the RecF family.

The protein localises to the cytoplasm. In terms of biological role, the RecF protein is involved in DNA metabolism; it is required for DNA replication and normal SOS inducibility. RecF binds preferentially to single-stranded, linear DNA. It also seems to bind ATP. The protein is DNA replication and repair protein RecF of Anaeromyxobacter dehalogenans (strain 2CP-1 / ATCC BAA-258).